The sequence spans 852 residues: Zinc finger and SCAN domain-containing protein 29 (852 aa).

Positions 18–100 constitute an SCAN box domain; the sequence is RQRFRRFHYQ…TLVEDLEREP (83 aa). Disordered stretches follow at residues 96–182, 347–400, and 502–557; these read LERE…PKSG, ASHS…SAAP, and PNDG…RAPV. K112 is covalently cross-linked (Glycyl lysine isopeptide (Lys-Gly) (interchain with G-Cter in SUMO2)). Position 153 is a phosphoserine (S153). K180 is covalently cross-linked (Glycyl lysine isopeptide (Lys-Gly) (interchain with G-Cter in SUMO2)). The segment covering 508–517 has biased composition (polar residues); that stretch reads ETASCPVQGT. Residues 528-545 are compositionally biased toward acidic residues; it reads EADEATEEDSDDDEEDTE. The residue at position 561 (S561) is a Phosphoserine. Residue K576 forms a Glycyl lysine isopeptide (Lys-Gly) (interchain with G-Cter in SUMO2) linkage. The segment at 603–625 is disordered; the sequence is QGKGNESDCRSGRQWAKTSGEKR. Residue K652 forms a Glycyl lysine isopeptide (Lys-Gly) (interchain with G-Cter in SUMO2) linkage. 6 C2H2-type zinc fingers span residues 678 to 700, 706 to 728, 734 to 756, 762 to 784, 790 to 812, and 818 to 840; these read YKCA…RRIH, YKCL…RRIH, YQCG…QRTH, YQCE…RRIH, HVCP…HRTH, and YGCH…GEIH.

The protein belongs to the krueppel C2H2-type zinc-finger protein family.

The protein localises to the nucleus. Functionally, may be involved in transcriptional regulation. This Homo sapiens (Human) protein is Zinc finger and SCAN domain-containing protein 29 (ZSCAN29).